The following is a 339-amino-acid chain: Phosphoribosylformylglycinamidine cyclo-ligase (339 aa).

The protein belongs to the AIR synthase family.

Its subcellular location is the cytoplasm. The enzyme catalyses 2-formamido-N(1)-(5-O-phospho-beta-D-ribosyl)acetamidine + ATP = 5-amino-1-(5-phospho-beta-D-ribosyl)imidazole + ADP + phosphate + H(+). The protein operates within purine metabolism; IMP biosynthesis via de novo pathway; 5-amino-1-(5-phospho-D-ribosyl)imidazole from N(2)-formyl-N(1)-(5-phospho-D-ribosyl)glycinamide: step 2/2. In Oceanobacillus iheyensis (strain DSM 14371 / CIP 107618 / JCM 11309 / KCTC 3954 / HTE831), this protein is Phosphoribosylformylglycinamidine cyclo-ligase.